The primary structure comprises 387 residues: Cyclin-J-like protein (387 aa).

A Cyclin N-terminal domain is found at 13-142 (DVHCTLREKE…LLEAFSWDLC (130 aa)).

The protein belongs to the cyclin family. Cyclin J subfamily.

The sequence is that of Cyclin-J-like protein (Ccnjl) from Mus musculus (Mouse).